We begin with the raw amino-acid sequence, 321 residues long: Beta-ketoacyl-[acyl-carrier-protein] synthase III (321 aa).

Active-site residues include cysteine 115 and histidine 248. An ACP-binding region spans residues glutamine 249–arginine 253. Residue asparagine 278 is part of the active site.

It belongs to the thiolase-like superfamily. FabH family. In terms of assembly, homodimer.

Its subcellular location is the cytoplasm. The catalysed reaction is malonyl-[ACP] + acetyl-CoA + H(+) = 3-oxobutanoyl-[ACP] + CO2 + CoA. It functions in the pathway lipid metabolism; fatty acid biosynthesis. Catalyzes the condensation reaction of fatty acid synthesis by the addition to an acyl acceptor of two carbons from malonyl-ACP. Catalyzes the first condensation reaction which initiates fatty acid synthesis and may therefore play a role in governing the total rate of fatty acid production. Possesses both acetoacetyl-ACP synthase and acetyl transacylase activities. Its substrate specificity determines the biosynthesis of branched-chain and/or straight-chain of fatty acids. The sequence is that of Beta-ketoacyl-[acyl-carrier-protein] synthase III from Azoarcus sp. (strain BH72).